The following is a 285-amino-acid chain: Mitochondrial substrate carrier family protein L (285 aa).

The Mitochondrial intermembrane segment spans residues 1 to 13 (MIASKETKEKIRN). 3 Solcar repeats span residues 8 to 94 (KEKI…VKSK), 103 to 185 (ISLG…AQRY), and 193 to 282 (MTMG…VMKF). A helical membrane pass occupies residues 14-34 (FIGGFASGAASTLAGHPFDTL). Over 35 to 69 (KVRLQTEGSTGRFRGLAHCFTTTIKEEGFFALYKG) the chain is Mitochondrial matrix. The chain crosses the membrane as a helical span at residues 70-90 (VTPPLLGMSIINSCMFGAMNI). Residues 91-102 (VKSKIHTDKSTP) lie on the Mitochondrial intermembrane side of the membrane. The chain crosses the membrane as a helical span at residues 103–123 (ISLGEIMVSGAITGWIVSFVA). Residues 124–156 (CPIETVKSKLQVQYTGVKLYNGPIDCIKKIGIR) lie on the Mitochondrial matrix side of the membrane. The helical transmembrane segment at 157-177 (GLYKALIPTGFQRNSLYAYFG) threads the bilayer. Topologically, residues 178–198 (CYELAQRYLRREDGSMTMGRS) are mitochondrial intermembrane. The helical transmembrane segment at 199-219 (FIAGGIAGTGFWLTNFPFDVI) threads the bilayer. Residues 220–256 (RSRIMTMPYNESPPRYKGMIDCAKHIYRVDGLKGFWK) are Mitochondrial matrix-facing. Residues 257–277 (GFSPCLLRTFPANGATFVAYE) form a helical membrane-spanning segment. Topologically, residues 278-285 (CVMKFFPM) are mitochondrial intermembrane.

This sequence belongs to the mitochondrial carrier (TC 2.A.29) family.

The protein resides in the mitochondrion inner membrane. Functionally, mitochondrial solute carriers shuttle metabolites, nucleotides, and cofactors through the mitochondrial inner membrane. The sequence is that of Mitochondrial substrate carrier family protein L (mcfL) from Dictyostelium discoideum (Social amoeba).